A 101-amino-acid polypeptide reads, in one-letter code: Ubiquitin-related modifier 1 (101 aa).

The residue at position 101 (G101) is a 1-thioglycine. G101 participates in a covalent cross-link: Glycyl lysine isopeptide (Gly-Lys) (interchain with K-? in acceptor proteins).

Belongs to the URM1 family. Post-translationally, C-terminal thiocarboxylation occurs in 2 steps, it is first acyl-adenylated (-COAMP) via the hesA/moeB/thiF part of UBA4, then thiocarboxylated (-COSH) via the rhodanese domain of UBA4.

The protein resides in the cytoplasm. It functions in the pathway tRNA modification; 5-methoxycarbonylmethyl-2-thiouridine-tRNA biosynthesis. Functionally, acts as a sulfur carrier required for 2-thiolation of mcm(5)S(2)U at tRNA wobble positions of cytosolic tRNA(Lys), tRNA(Glu) and tRNA(Gln). Serves as sulfur donor in tRNA 2-thiolation reaction by being thiocarboxylated (-COSH) at its C-terminus by the MOCS3 homolog UBA4. The sulfur is then transferred to tRNA to form 2-thiolation of mcm(5)S(2)U. Prior mcm(5) tRNA modification by the elongator complex is required for 2-thiolation. Also acts as a ubiquitin-like protein (UBL) that is covalently conjugated via an isopeptide bond to lysine residues of target proteins such as AHP1. The thiocarboxylated form serves as substrate for conjugation and oxidative stress specifically induces the formation of UBL-protein conjugates. This Debaryomyces hansenii (strain ATCC 36239 / CBS 767 / BCRC 21394 / JCM 1990 / NBRC 0083 / IGC 2968) (Yeast) protein is Ubiquitin-related modifier 1.